Here is a 4010-residue protein sequence, read N- to C-terminus: Extracellular matrix organizing protein FRAS1 (4010 aa).

Residues 1–25 (MGVLKAWLGVALALAEFAVLPNCEG) form the signal peptide. VWFC domains are found at residues 26–87 (ACLY…PQCA), 92–152 (GSCH…PICV), 156–216 (KPCS…SQCS), 218–278 (RSCS…EECA), and 282–342 (RSCS…PECI). Residues 26-3903 (ACLYQGSFLA…AASLSQTGAS (3878 aa)) are Extracellular-facing. Residue serine 343 is modified to Phosphoserine. One can recognise a VWFC 6 domain in the interval 358 to 416 (SSSAREIKHVPDGEKWEEGPCKLCECREAQVTCYEPSCPPCPVATLALVVKGQCCPDCT). FU repeat units lie at residues 408–459 (KGQC…GFYQ), 461–504 (GSLC…GFYQ), 506–552 (HHSC…GFYN), 554–598 (QGTC…GYYA), 601–646 (TGSC…GFYP), 648–704 (HGIC…HFYL), 707–752 (TGLC…THFN), 754–799 (EGTC…EQFL), 802–851 (VGYC…GHYK), 853–899 (RGTC…GHYL), 902–947 (NQVC…QYYL), 951–996 (TKTC…QHYR), 998–1041 (SGSC…GYFA), and 1045–1088 (KHRC…GFSG). Asparagine 727 carries N-linked (GlcNAc...) asparagine glycosylation. 2 N-linked (GlcNAc...) asparagine glycosylation sites follow: asparagine 1094 and asparagine 1107. CSPG repeat units follow at residues 1101-1196 (TPSL…LKIS), 1216-1307 (APYV…FQAN), 1328-1440 (ALRL…FQVS), 1465-1561 (APKL…FSFA), 1597-1691 (PAFQ…ISVT), 1712-1812 (GPRL…FSVS), and 1834-1938 (PPHI…FYVS). Asparagine 1506 is a glycosylation site (N-linked (GlcNAc...) asparagine). Asparagine 1779 is a glycosylation site (N-linked (GlcNAc...) asparagine). N-linked (GlcNAc...) asparagine glycans are attached at residues asparagine 1950 and asparagine 1980. CSPG repeat units follow at residues 1959–2059 (EPPR…FSLT), 2080–2179 (IPHL…FDVV), 2201–2293 (PPVV…FVLS), 2313–2406 (ARPL…FTVS), and 2441–2538 (TPRI…FLVK). 5 Calx-beta domains span residues 2545 to 2648 (VSDN…VGLS), 2661 to 2772 (AKVV…IALA), 2786 to 2892 (AKVL…VFLS), 2907 to 3009 (IAIN…VYLG), and 3027 to 3131 (ATVT…LVLG). Asparagine 2565, asparagine 2666, and asparagine 2684 each carry an N-linked (GlcNAc...) asparagine glycan. N-linked (GlcNAc...) asparagine glycosylation is found at asparagine 2910, asparagine 2987, asparagine 3072, asparagine 3220, asparagine 3678, and asparagine 3877. The helical transmembrane segment at 3904–3924 (IGSALAAIMLLLLLFLVACFV) threads the bilayer. The Cytoplasmic segment spans residues 3925-4010 (TRKCQKQKKK…HNNLQDGTEV (86 aa)).

Belongs to the FRAS1 family.

It is found in the cell membrane. Its function is as follows. Involved in extracellular matrix organization. Required for the regulation of epidermal-basement membrane adhesion responsible for proper organogenesis during embryonic development. Involved in brain organization and function. The sequence is that of Extracellular matrix organizing protein FRAS1 from Mus musculus (Mouse).